The primary structure comprises 290 residues: 30 kDa spicule matrix protein alpha (290 aa).

An N-terminal signal peptide occupies residues 1–20 (MRGFVYVLVCVLALASFSRA). Residues 92 to 162 (ANMYCGQMHP…YTNWERMTAP (71 aa)) enclose the C-type lectin domain. A glycan (N-linked (GlcNAc...) asparagine) is linked at Asn102.

Accumulates exclusively in mineralized tissues.

Its function is as follows. Matrix protein of the sea urchin embryo spicule. The function of the matrix proteins is to direct crystal growth in certain orientations and inhibit growth in others. This Strongylocentrotus purpuratus (Purple sea urchin) protein is 30 kDa spicule matrix protein alpha (SM30A).